The primary structure comprises 248 residues: Large ribosomal subunit protein uL30 (248 aa).

At methionine 1 the chain carries N-acetylmethionine. 4 tandem repeats follow at residues 7–18 (KKKEVPAVPETL), 19–30 (KKKRRNFAELKI), 31–42 (KRLRKKFAQKML), and 43–54 (RKARRKLIYEKA). Residues 7–54 (KKKEVPAVPETLKKKRRNFAELKIKRLRKKFAQKMLRKARRKLIYEKA) form a 4 X 12 AA tandem repeats region. Threonine 17 is subject to Phosphothreonine. Lysine 124 bears the N6-acetyllysine mark. N6-succinyllysine is present on lysine 127. At tyrosine 139 the chain carries Phosphotyrosine.

Belongs to the universal ribosomal protein uL30 family. Component of the large ribosomal subunit. Homodimer. Interacts with DHX33.

It is found in the cytoplasm. Component of the large ribosomal subunit. The ribosome is a large ribonucleoprotein complex responsible for the synthesis of proteins in the cell. Binds to G-rich structures in 28S rRNA and in mRNAs. Plays a regulatory role in the translation apparatus; inhibits cell-free translation of mRNAs. This is Large ribosomal subunit protein uL30 (RPL7) from Homo sapiens (Human).